We begin with the raw amino-acid sequence, 294 residues long: UDP-3-O-acyl-N-acetylglucosamine deacetylase (294 aa).

Zn(2+) is bound by residues His-75, His-232, and Asp-236. His-259 serves as the catalytic Proton donor.

This sequence belongs to the LpxC family. Requires Zn(2+) as cofactor.

The enzyme catalyses a UDP-3-O-[(3R)-3-hydroxyacyl]-N-acetyl-alpha-D-glucosamine + H2O = a UDP-3-O-[(3R)-3-hydroxyacyl]-alpha-D-glucosamine + acetate. It participates in glycolipid biosynthesis; lipid IV(A) biosynthesis; lipid IV(A) from (3R)-3-hydroxytetradecanoyl-[acyl-carrier-protein] and UDP-N-acetyl-alpha-D-glucosamine: step 2/6. Functionally, catalyzes the hydrolysis of UDP-3-O-myristoyl-N-acetylglucosamine to form UDP-3-O-myristoylglucosamine and acetate, the committed step in lipid A biosynthesis. This is UDP-3-O-acyl-N-acetylglucosamine deacetylase from Campylobacter jejuni subsp. jejuni serotype O:2 (strain ATCC 700819 / NCTC 11168).